A 349-amino-acid polypeptide reads, in one-letter code: Anthranilate phosphoribosyltransferase (349 aa).

5-phospho-alpha-D-ribose 1-diphosphate-binding positions include G82, 85–86 (GD), 92–95 (NVSS), 110–118 (KHGNRAVSG), and S122. G82 is a binding site for anthranilate. S94 contacts Mg(2+). Residue N113 participates in anthranilate binding. R168 lines the anthranilate pocket. Mg(2+) contacts are provided by D227 and E228.

The protein belongs to the anthranilate phosphoribosyltransferase family. In terms of assembly, homodimer. It depends on Mg(2+) as a cofactor.

It catalyses the reaction N-(5-phospho-beta-D-ribosyl)anthranilate + diphosphate = 5-phospho-alpha-D-ribose 1-diphosphate + anthranilate. Its pathway is amino-acid biosynthesis; L-tryptophan biosynthesis; L-tryptophan from chorismate: step 2/5. In terms of biological role, catalyzes the transfer of the phosphoribosyl group of 5-phosphorylribose-1-pyrophosphate (PRPP) to anthranilate to yield N-(5'-phosphoribosyl)-anthranilate (PRA). This chain is Anthranilate phosphoribosyltransferase, found in Pseudomonas aeruginosa (strain LESB58).